Consider the following 406-residue polypeptide: Fructose-1,6-bisphosphatase, chloroplastic (406 aa).

Residues 1 to 47 constitute a chloroplast transit peptide; it reads MAAAATTSSHLLLLSRQQAAASLQCGLSFRRQPGRLAGGSSAPSVRC. Mg(2+) is bound by residues E128, E157, D178, L180, and D181. Residue 181-184 participates in substrate binding; that stretch reads DGSS. A disulfide bridge connects residues C222 and C227. Substrate contacts are provided by N286, Y318, Y336, Y338, and K348. A Mg(2+)-binding site is contributed by E354.

The protein belongs to the FBPase class 1 family. In terms of assembly, homotetramer. Mg(2+) serves as cofactor.

The protein localises to the plastid. It is found in the chloroplast stroma. The catalysed reaction is beta-D-fructose 1,6-bisphosphate + H2O = beta-D-fructose 6-phosphate + phosphate. The protein operates within carbohydrate biosynthesis; Calvin cycle. Inhibited by sodium chloride. Catalyzes the irreversible reaction from fructose-1,6-bisphosphate to fructose-6-phosphate and inorganic phosphate, to regenerate the primary CO(2) acceptor molecule, ribulose-1,5-bisphosphate. Involved in the regulation of photosynthetic performance and sucrose synthesis. In Oryza sativa subsp. indica (Rice), this protein is Fructose-1,6-bisphosphatase, chloroplastic.